Here is a 445-residue protein sequence, read N- to C-terminus: Trigger factor (445 aa).

The 86-residue stretch at 166–251 folds into the PPIase FKBP-type domain; the sequence is GDVVVVDFVG…AKALKRPVDV (86 aa).

Belongs to the FKBP-type PPIase family. Tig subfamily.

The protein resides in the cytoplasm. It catalyses the reaction [protein]-peptidylproline (omega=180) = [protein]-peptidylproline (omega=0). Involved in protein export. Acts as a chaperone by maintaining the newly synthesized protein in an open conformation. Functions as a peptidyl-prolyl cis-trans isomerase. The sequence is that of Trigger factor from Gluconacetobacter diazotrophicus (strain ATCC 49037 / DSM 5601 / CCUG 37298 / CIP 103539 / LMG 7603 / PAl5).